The sequence spans 619 residues: 1-deoxy-D-xylulose-5-phosphate synthase (619 aa).

Thiamine diphosphate-binding positions include His74 and 115–117 (GHS). Residue Asp146 coordinates Mg(2+). Thiamine diphosphate is bound by residues 147 to 148 (GA), Asn175, and Tyr285. Residue Asn175 coordinates Mg(2+). The tract at residues 289–310 (EKSPSKYHGIPPSNDKKEEPNK) is disordered. Glu365 contributes to the thiamine diphosphate binding site.

This sequence belongs to the transketolase family. DXPS subfamily. Homodimer. Mg(2+) is required as a cofactor. It depends on thiamine diphosphate as a cofactor.

It catalyses the reaction D-glyceraldehyde 3-phosphate + pyruvate + H(+) = 1-deoxy-D-xylulose 5-phosphate + CO2. It functions in the pathway metabolic intermediate biosynthesis; 1-deoxy-D-xylulose 5-phosphate biosynthesis; 1-deoxy-D-xylulose 5-phosphate from D-glyceraldehyde 3-phosphate and pyruvate: step 1/1. Functionally, catalyzes the acyloin condensation reaction between C atoms 2 and 3 of pyruvate and glyceraldehyde 3-phosphate to yield 1-deoxy-D-xylulose-5-phosphate (DXP). This chain is 1-deoxy-D-xylulose-5-phosphate synthase, found in Clostridium botulinum (strain Alaska E43 / Type E3).